The sequence spans 207 residues: SPRY domain-containing protein 4 (207 aa).

Residues 12–206 (CRWGAKRLGV…THSGLEVPEG (195 aa)) form the B30.2/SPRY domain. N6-acetyllysine is present on residues lysine 53 and lysine 130. The residue at position 139 (lysine 139) is an N6-succinyllysine.

The protein is SPRY domain-containing protein 4 (SPRYD4) of Homo sapiens (Human).